Here is a 501-residue protein sequence, read N- to C-terminus: Probable cytosol aminopeptidase (501 aa).

2 residues coordinate Mn(2+): Lys268 and Asp273. Residue Lys280 is part of the active site. Asp291, Asp350, and Glu352 together coordinate Mn(2+). Residue Arg354 is part of the active site.

Belongs to the peptidase M17 family. Mn(2+) serves as cofactor.

It is found in the cytoplasm. The catalysed reaction is Release of an N-terminal amino acid, Xaa-|-Yaa-, in which Xaa is preferably Leu, but may be other amino acids including Pro although not Arg or Lys, and Yaa may be Pro. Amino acid amides and methyl esters are also readily hydrolyzed, but rates on arylamides are exceedingly low.. It catalyses the reaction Release of an N-terminal amino acid, preferentially leucine, but not glutamic or aspartic acids.. In terms of biological role, presumably involved in the processing and regular turnover of intracellular proteins. Catalyzes the removal of unsubstituted N-terminal amino acids from various peptides. This chain is Probable cytosol aminopeptidase, found in Colwellia psychrerythraea (strain 34H / ATCC BAA-681) (Vibrio psychroerythus).